The sequence spans 502 residues: Large ribosomal subunit protein uL2m (502 aa).

The segment at 458–502 (AMNPVDHPHGGGEGRTKGGRPSVSPWGKPTKAGFRAGVGVGKRRI) is disordered. Over residues 463 to 473 (DHPHGGGEGRT) the composition is skewed to basic and acidic residues. The segment covering 493-502 (AGVGVGKRRI) has biased composition (gly residues).

This sequence belongs to the universal ribosomal protein uL2 family.

It localises to the mitochondrion. This chain is Large ribosomal subunit protein uL2m (RPL2), found in Oryza sativa (Rice).